Here is a 423-residue protein sequence, read N- to C-terminus: Cytidylate cyclase (423 aa).

A Guanylate cyclase domain is found at 79 to 184; sequence CSLFVDISGS…LKIRIGIDFG (106 aa). Residue phenylalanine 82 coordinates a ribonucleoside 5'-triphosphate. Mn(2+) is bound by residues aspartate 84, isoleucine 85, and aspartate 128. An AGS-C domain region spans residues 290 to 409; that stretch reads ENEQFYSPRD…ICHDSFGLFI (120 aa).

It belongs to the adenylyl cyclase class-4/guanylyl cyclase family. Pyrimidine cyclase subfamily. In terms of assembly, homodimer. It depends on Mn(2+) as a cofactor.

Its subcellular location is the cytoplasm. It carries out the reaction CTP = 3',5'-cyclic CMP + diphosphate. In terms of biological role, pycsar (pyrimidine cyclase system for antiphage resistance) provides immunity against bacteriophage. The pyrimidine cyclase (PycC) synthesizes cyclic nucleotides in response to infection; these serve as specific second messenger signals. The signal activates the adjacent effector, leading to bacterial cell death and abortive phage infection. A clade E Pycsar system. The pyrimidine cyclase gene of a two-gene Pycsar system, weakly generates cyclic CMP (cCMP) from CTP, has little to no activity on ATP, GTP or UTP. Expression of this and adjacent effector SaPycTM (AC P0DV39) probably confers resistance to bacteriophage. The genes are probably only expressed in response to bacteriophage infection. The chain is Cytidylate cyclase from Staphylococcus aureus.